A 403-amino-acid polypeptide reads, in one-letter code: MTKQKGTILKLKNNLAIIMTSDCKIVSIKRQPGMYEGLEISFNKNEIINKKNKLAFYSRIAAGIAAIFIIMVISFNLFNNNDVYAYVAIDSDASIEFELDKNNKIVKVNYYNDNTNTVLDELDLKNKPVDFAIKEVIKKLDLNESVILISACLKEQNTKKSSASDNYESEKLSKLIDICKNAVEVNVSENVESKVVEVSYDYKKLAEKNKLSLGRSIVYEKAKEQGIALNIEDIKNKSIGETLQKVKIDDVGVVHNVKKEEPKKPMPEKPEPGKPEPQKPEPGKPDPAKPEPGKPGPEKPEPEKPEPAKPEPAKPEPQPQINDLPKDKTIPEEKTIPNSGVEPMAEPIVEPKDKQQEKPRPDSKLKLEEKPTVEPKDSLEEKPVTKPKDDKKEKAKNSIEKMP.

The Cytoplasmic portion of the chain corresponds to 1 to 59 (MTKQKGTILKLKNNLAIIMTSDCKIVSIKRQPGMYEGLEISFNKNEIINKKNKLAFYSR). In terms of domain architecture, RsgI N-terminal anti-sigma spans 4–51 (QKGTILKLKNNLAIIMTSDCKIVSIKRQPGMYEGLEISFNKNEIINKK). The helical transmembrane segment at 60 to 80 (IAAGIAAIFIIMVISFNLFNN) threads the bilayer. The Extracellular portion of the chain corresponds to 81–403 (NDVYAYVAID…KAKNSIEKMP (323 aa)). Composition is skewed to basic and acidic residues over residues 254–314 (VHNV…EPAK), 324–335 (LPKDKTIPEEKT), and 349–403 (VEPK…EKMP). The segment at 254-403 (VHNVKKEEPK…KAKNSIEKMP (150 aa)) is disordered.

Interacts (via RsgI N-terminal anti-sigma domain) with SigI8.

The protein localises to the cell membrane. Anti-sigma factor for SigI8. Negatively regulates SigI8 activity through direct interaction. The sequence is that of Anti-sigma-I factor RsgI8 from Acetivibrio thermocellus (strain ATCC 27405 / DSM 1237 / JCM 9322 / NBRC 103400 / NCIMB 10682 / NRRL B-4536 / VPI 7372) (Clostridium thermocellum).